A 182-amino-acid chain; its full sequence is Large ribosomal subunit protein uL5m (182 aa).

It belongs to the universal ribosomal protein uL5 family.

The protein resides in the mitochondrion. The sequence is that of Large ribosomal subunit protein uL5m (RPL5) from Reclinomonas americana.